A 746-amino-acid polypeptide reads, in one-letter code: Exostosin-1 (746 aa).

At M1–K5 the chain is on the cytoplasmic side. Residues R6 to V26 form a helical; Signal-anchor for type II membrane protein membrane-spanning segment. The Lumenal portion of the chain corresponds to Q27–L746. A glycan (N-linked (GlcNAc...) asparagine) is linked at N89. Intrachain disulfides connect C98–C103 and C109–C152. Residues L166 and Y203 each coordinate a protein. Residues K267, K269, Y271, and R280 each contribute to the UDP site. A disulfide bridge connects residues C298 and C312. H300 is an a protein binding site. UDP contacts are provided by Y319 and Y324. N-linked (GlcNAc...) asparagine glycosylation is present at N330. 2 cysteine pairs are disulfide-bonded: C334-C355 and C652-C704. R346 and E349 together coordinate UDP.

The protein belongs to the glycosyltransferase 47 family. As to quaternary structure, part of the heparan sulfate polymerase, a dimeric complex composed of EXT1 and EXT2. Could also form homooligomeric complexes. Interacts with NDST1. In terms of processing, N-glycosylated.

It localises to the golgi apparatus membrane. It is found in the golgi apparatus. The protein resides in the cis-Golgi network membrane. The protein localises to the endoplasmic reticulum membrane. It carries out the reaction 3-O-{alpha-D-GlcNAc-[(1-&gt;4)-beta-D-GlcA-(1-&gt;4)-alpha-D-GlcNAc](n)-(1-&gt;4)-beta-D-GlcA-(1-&gt;3)-beta-D-Gal-(1-&gt;3)-beta-D-Gal-(1-&gt;4)-beta-D-Xyl}-L-seryl-[protein] + UDP-alpha-D-glucuronate = 3-O-{[(1-&gt;4)-beta-D-GlcA-(1-&gt;4)-alpha-D-GlcNAc](n+1)-(1-&gt;4)-beta-D-GlcA-(1-&gt;3)-beta-D-Gal-(1-&gt;3)-beta-D-Gal-(1-&gt;4)-beta-D-Xyl}-L-seryl-[protein] + UDP + H(+). It functions in the pathway protein modification; protein glycosylation. Glycosyltransferase forming with EXT2 the heterodimeric heparan sulfate polymerase which catalyzes the elongation of the heparan sulfate glycan backbone. Glycan backbone extension consists in the alternating transfer of (1-&gt;4)-beta-D-GlcA and (1-&gt;4)-alpha-D-GlcNAc residues from their respective UDP-sugar donors. Both EXT1 and EXT2 are required for the full activity of the polymerase since EXT1 bears the N-acetylglucosaminyl-proteoglycan 4-beta-glucuronosyltransferase activity within the complex while EXT2 carries the glucuronosyl-N-acetylglucosaminyl-proteoglycan 4-alpha-N-acetylglucosaminyltransferase activity. Heparan sulfate proteoglycans are ubiquitous components of the extracellular matrix and play an important role in tissue homeostasis and signaling. The polypeptide is Exostosin-1 (Cricetulus griseus (Chinese hamster)).